Reading from the N-terminus, the 345-residue chain is Cytoskeleton protein RodZ (345 aa).

Topologically, residues 1–111 (MNTEASQDQT…LGKKHKKRDG (111 aa)) are cytoplasmic. The HTH cro/C1-type domain occupies 19–79 (LRQARESLGL…KLVHLPEDEL (61 aa)). The segment at residues 30–49 (QQTVAERLCLKVSTIRDIEE) is a DNA-binding region (H-T-H motif). The chain crosses the membrane as a helical; Signal-anchor for type II membrane protein span at residues 112-132 (WLMSFTWLIVLVVLGLTGAWW). At 133-345 (WQNHQAQQAE…RVARLTVGVE (213 aa)) the chain is on the periplasmic side. The segment at 151–260 (SAQLSQNGGQ…LPTADAGVSG (110 aa)) is disordered. The segment covering 188–225 (PLTNHSGSAITNSATTSSVPKTTSTEPVDTANTNTTMH) has biased composition (polar residues). Low complexity predominate over residues 229–241 (AASAAVSPSQVPQ).

This sequence belongs to the RodZ family.

It is found in the cell inner membrane. In terms of biological role, cytoskeletal protein that is involved in cell-shape control through regulation of the length of the long axis. The sequence is that of Cytoskeleton protein RodZ from Yersinia pestis (strain Pestoides F).